A 275-amino-acid chain; its full sequence is Rhamnulose-1-phosphate aldolase (275 aa).

The active site involves Glu-117. Zn(2+) is bound by residues His-141, His-143, and His-212.

Belongs to the aldolase class II family. RhaD subfamily. Homotetramer. Zn(2+) is required as a cofactor.

The protein localises to the cytoplasm. The enzyme catalyses L-rhamnulose 1-phosphate = (S)-lactaldehyde + dihydroxyacetone phosphate. The protein operates within carbohydrate degradation; L-rhamnose degradation; glycerone phosphate from L-rhamnose: step 3/3. Catalyzes the reversible cleavage of L-rhamnulose-1-phosphate to dihydroxyacetone phosphate (DHAP) and L-lactaldehyde. The polypeptide is Rhamnulose-1-phosphate aldolase (Salmonella paratyphi C (strain RKS4594)).